Reading from the N-terminus, the 648-residue chain is A-type voltage-gated potassium channel KCND1 (648 aa).

Over 1 to 183 (MAAGVATWLP…RAFENPHTST (183 aa)) the chain is Cytoplasmic. The segment at 2 to 20 (AAGVATWLPFARAAAVGWL) is interaction with KCNIP1, KCNIP2, and other family members. Residues 2–20 (AAGVATWLPFARAAAVGWL) form an interaction with KCNIP2 region. Zn(2+) is bound by residues H104, C131, and C132. The segment at 144-164 (AERLAEDEEAEQAGDGPTLPA) is disordered. Residues 184 to 205 (AALVFYYVTGFFIAVSVIANVV) traverse the membrane as a helical segment. Residues 206-230 (ETIPCRSPTRRPPREQPCGDRFPLA) are Extracellular-facing. The chain crosses the membrane as a helical span at residues 231 to 252 (FFCMDTACVLIFTGEYLLRLFA). The Cytoplasmic segment spans residues 253 to 263 (APSRCRFLRSV). The helical transmembrane segment at 264–284 (MSLIDVVAILPYYIGLFMPKN) threads the bilayer. Over 285 to 287 (EDV) the chain is Extracellular. The helical; Voltage-sensor transmembrane segment at 288–308 (SGAFVTLRVFRVFRIFKFSRH) threads the bilayer. Topologically, residues 309–323 (SQGLRILGYTLKSCA) are cytoplasmic. Positions 310–323 (QGLRILGYTLKSCA) are S4-S5 linker. The helical transmembrane segment at 324-345 (SELGFLLFSLTMAIIIFATVMF) threads the bilayer. At 346 to 359 (YAEKGTNKTNFTSI) the chain is on the extracellular side. N-linked (GlcNAc...) asparagine glycosylation is found at N352 and N355. Residues 360-371 (PAAFWYTIVTMT) constitute an intramembrane region (helical). A Selectivity filter motif is present at residues 372-377 (TLGYGD). Residues 372 to 379 (TLGYGDMV) lie within the membrane without spanning it. At 380 to 386 (PSTIAGK) the chain is on the extracellular side. A helical membrane pass occupies residues 387-415 (IFGSICSLSGVLVIALPVPVIVSNFSRIY). The Cytoplasmic portion of the chain corresponds to 416 to 648 (HQNQRADKRR…LPETVKISSL (233 aa)). S458 is subject to Phosphoserine. The mediates dendritic targeting stretch occupies residues 474 to 489 (FEQQHHHLLHCLEKTT). The segment at 474 to 489 (FEQQHHHLLHCLEKTT) is required for dendritic targeting. S555 carries the phosphoserine modification. The tract at residues 601–636 (IPTPPANTPDESQPSSPGGGGGGASSTLRNSSLGTP) is disordered.

Belongs to the potassium channel family. D (Shal) (TC 1.A.1.2) subfamily. Kv4.1/KCND1 sub-subfamily. As to quaternary structure, component of heteromultimeric potassium channels. Identified in potassium channel complexes containing KCND1, KCND2, KCND3, KCNIP1, KCNIP2, KCNIP3, KCNIP4, DPP6 and DPP10.

The protein localises to the cell membrane. It carries out the reaction K(+)(in) = K(+)(out). A-type voltage-gated potassium channel that mediates transmembrane potassium transport in excitable membranes in the brain. Mediates A-type current I(SA) in suprachiasmatic nucleus (SCN) neurons. Exhibits a low-threshold A-type current with a hyperpolarized steady-state inactivation midpoint and the recovery process was steeply voltage-dependent, with recovery being markedly faster at more negative potentials. May regulates repetitive firing rates in the suprachiasmatic nucleus (SCN) neurons and circadian rhythms in neuronal excitability and behavior. Contributes to the regulation of the circadian rhythm of action potential firing in suprachiasmatic nucleus neurons, which regulates the circadian rhythm of locomotor activity. The regulatory subunit KCNIP1 modulates the kinetics of channel inactivation, increases the current amplitudes and accelerates recovery from inactivation, shifts activation in a depolarizing direction. The regulatory subunit DPP10 decreases the voltage sensitivity of the inactivation channel gating. This Bos taurus (Bovine) protein is A-type voltage-gated potassium channel KCND1.